We begin with the raw amino-acid sequence, 421 residues long: Polymerase delta-interacting protein 3 (421 aa).

N-acetylalanine is present on Ala2. At Ser5 the chain carries Phosphoserine. An Omega-N-methylarginine modification is found at Arg33. 2 positions are modified to phosphoserine: Ser44 and Ser127. Thr140 carries the phosphothreonine modification. Lys200 participates in a covalent cross-link: Glycyl lysine isopeptide (Lys-Gly) (interchain with G-Cter in SUMO2). Phosphoserine occurs at positions 204, 215, and 217. Lys223 participates in a covalent cross-link: Glycyl lysine isopeptide (Lys-Gly) (interchain with G-Cter in SUMO2). Phosphoserine is present on Ser244. Lys248 participates in a covalent cross-link: Glycyl lysine isopeptide (Lys-Gly) (interchain with G-Cter in SUMO2). At Ser275 the chain carries Phosphoserine. Residues 280 to 351 (TKMTVNNLHP…QPMKCNLHMN (72 aa)) enclose the RRM domain. Over residues 370-379 (SMKKESELPR) the composition is skewed to basic and acidic residues. Positions 370 to 393 (SMKKESELPRRVNSASSSNPPAEV) are disordered. Residue Lys372 forms a Glycyl lysine isopeptide (Lys-Gly) (interchain with G-Cter in SUMO2) linkage. 2 positions are modified to phosphoserine; by RPS6KB1: Ser383 and Ser385. Lys418 participates in a covalent cross-link: Glycyl lysine isopeptide (Lys-Gly) (interchain with G-Cter in SUMO2).

In terms of assembly, interacts with POLD2. Interacts with NCBP1 and EIF4A3. Associates with the multiprotein exon junction complex (EJC). Interacts with RPS6KB1 (activated). Interacts with ERH. Interacts with THOC2, DDX39B and ZC3H11A; the interactions are ATP-dependent and indicative for an association with the TREX complex. In terms of processing, phosphorylated at Ser-383 and Ser-385 by RPS6KB1.

Its subcellular location is the nucleus. It localises to the nucleus speckle. The protein localises to the cytoplasm. Functionally, is involved in regulation of translation. Is preferentially associated with CBC-bound spliced mRNA-protein complexes during the pioneer round of mRNA translation. Contributes to enhanced translational efficiency of spliced over nonspliced mRNAs. Recruits activated ribosomal protein S6 kinase beta-1 I/RPS6KB1 to newly synthesized mRNA. Involved in nuclear mRNA export; probably mediated by association with the TREX complex. The polypeptide is Polymerase delta-interacting protein 3 (POLDIP3) (Homo sapiens (Human)).